The following is a 372-amino-acid chain: Meiotic drive suppressor wtf18 (372 aa).

The next 6 membrane-spanning stretches (helical) occupy residues 86-106, 120-140, 153-173, 197-217, 233-253, and 257-277; these read FLLR…TAWV, AFSV…FCFF, VTVI…AQCV, DLVV…FGCV, CSIS…IWTL, and LFGL…TKGL.

Belongs to the WTF family. As to quaternary structure, homomer. Interacts with other proteins that exhibit high sequence similarity.

The protein localises to the spore membrane. The protein resides in the vacuole membrane. Acts as a suppressor component of the dual wtf meiotic drive system, and can suppress but not confer meiotic drive by compatible poisons. Wtf meiotic drive systems promote unequal transmission of alleles from the parental zygote to progeny spores by encoding a poison and an antidote from the same locus; the poison is trans-acting and forms toxic aggregates in all spores within an ascus, wherease the antidote is spore-specific and targets aggregates for degradation by the vacuole. Meiotic drive by wtf systems therefore lead to poisoning of all progeny that do not inherit the dual poison/antidote allele, or express a compatible antidote. In Schizosaccharomyces pombe (strain 972 / ATCC 24843) (Fission yeast), this protein is Meiotic drive suppressor wtf18.